The sequence spans 245 residues: Gem-associated protein 2 (245 aa).

Belongs to the gemin-2 family. Component of the core survival motor neuron (SMN) complex composed of Smn, Gem2, Gem3, rig/Gem5 and one of 3 almost identical Gem4 paralogs encoded by Glos/Gem4a, Gem4b or Gem4c. Part of a minimal SMN complex composed of Smn and Gem2 only; this complex is active in UsnRNP assembly. The SMN complex associates with the entire set of spliceosomal snRNP Sm proteins, SmB, SmD1, SmD2, SmD3, SmE, SmF and SmG, and with the snRNP-specific proteins snRNP-U1-70K, U2A, snf/U1A and U5-116KD. As to expression, expressed in nurse cells and oocytes.

Its subcellular location is the cytoplasm. The protein localises to the U-body. In terms of biological role, component of the survival motor neuron (SMN) complex that catalyzes the assembly of small nuclear ribonucleoproteins (snRNPs), the building blocks of the spliceosome, and thereby plays an important role in the splicing of cellular pre-mRNAs. Most spliceosomal snRNPs contain a common set of Sm proteins SNRPB, SNRPD1, SNRPD2, SNRPD3, SNRPE, SNRPF and SNRPG that assemble in a heptameric protein ring on the Sm site of the small nuclear RNA to form the core snRNP (Sm core). In the cytosol, the Sm proteins SNRPD1, SNRPD2, SNRPE, SNRPF and SNRPG (5Sm) are trapped in an inactive 6S pICln-Sm complex by the chaperone CLNS1A that controls the assembly of the core snRNP. To assemble core snRNPs, the SMN complex accepts the trapped 5Sm proteins from CLNS1A. Binding of snRNA inside 5Sm ultimately triggers eviction of the SMN complex, thereby allowing binding of SNRPD3 and SNRPB to complete assembly of the core snRNP. Within the SMN complex, GEMIN2 constrains the conformation of 5Sm, thereby promoting 5Sm binding to snRNA containing the snRNP code (a nonameric Sm site and a 3'-adjacent stem-loop), thus preventing progression of assembly until a cognate substrate is bound. Involved in adult motor function. This chain is Gem-associated protein 2, found in Drosophila melanogaster (Fruit fly).